A 364-amino-acid polypeptide reads, in one-letter code: Aminomethyltransferase (364 aa).

This sequence belongs to the GcvT family. The glycine cleavage system is composed of four proteins: P, T, L and H.

It carries out the reaction N(6)-[(R)-S(8)-aminomethyldihydrolipoyl]-L-lysyl-[protein] + (6S)-5,6,7,8-tetrahydrofolate = N(6)-[(R)-dihydrolipoyl]-L-lysyl-[protein] + (6R)-5,10-methylene-5,6,7,8-tetrahydrofolate + NH4(+). In terms of biological role, the glycine cleavage system catalyzes the degradation of glycine. In Salmonella paratyphi B (strain ATCC BAA-1250 / SPB7), this protein is Aminomethyltransferase.